We begin with the raw amino-acid sequence, 1161 residues long: MLRRVAVAAVFATGRKLRCEAGRDVTAVGRIEARGLCEESAKPFPTLTMPGRNKAKSTCSCPDLQPNGQDLGESGRVARLGADESEEEGRSLSNVGDPEIIKSPSDPKQYRYIKLQNGLQALLISDLSNVEGKTGNATDEEEEEEEEEEEGEEEEEEEEDDDDDDDEDSGAEIQDDDEEGFDDEEEFDDDEHDDDDLDNEENELEELEERVEARKKTTEKQSAAALCVGVGSFADPDDLPGLAHFLEHMVFMGSLKYPDENGFDAFLKKHGGSDNASTDCERTVFQFDVQRKYFKEALDRWAQFFIHPLMIRDAIDREVEAVDSEYQLARPSDANRKEMLFGSLARPGHPMGKFFWGNAETLKHEPKKNNIDTHARLREFWMRYYSAHYMTLVVQSKETLDTLEKWVTEIFSQIPNNGLPKPNFSHLTDPFDTPAFNKLYRVVPIRKIHALTITWALPPQQQHYRVKPLHYISWLVGHEGKGSILSYLRKKCWALALFGGNGETGFEQNSTYSVFSISITLTDEGYEHFYEVAHTVFQYLKMLQKLGPEKRVFEEIQKIEDNEFHYQEQTDPVEYVENMCENMQLYPRQDFLTGDQLLFEYKPEVIAEALNQLVPQKANLVLLSGANEGRCDLKEKWFGTQYSIEDIENSWTELWKSNFDLNSDLHLPAENKYIATDFTLKAFDCPETEYPAKIVNTPQGCLWYKKDNKFKIPKAYIRFHLISPLIQKSAANVVLFDIFVNILTHNLAEPAYEADVAQLEYKLVAGEHGLIIRVKGFNHKLPLLFQLIIDYLTEFSSTPAVFTMITEQLKKTYFNILIKPETLAKDVRLLILEYSRWSMIDKYRALMDGLSLESLLNFVKDFKSQLFVEGLVQGNVTSTESMDFLRYVVDKLNFVPLEREMPVQFQVVELPSGHHLCKVRALNKGDANSEVTVYYQSGTRSLREYTLMELLVMHMEEPCFDFLRTKQTLGYHVYPTCRNTSGILGFSVTVGTQATKYNSETVDKKIEEFLSSFEEKIENLTEDAFNTQVTALIKLKECEDTHLGEEVDRNWNEVVTQQYLFDRLAHEIEALKSFSKSDLVSWFKAHRGPGSKMLSVHVVGYGKYELEEDGAPVCEDPNSREGMQLIYLPPSPLLAESTTPITDIRAFTATLSLFPYHKIVK.

Residues 1–18 (MLRRVAVAAVFATGRKLR) form the signal peptide. 2 disordered regions span residues 42 to 105 (KPFP…KSPS) and 130 to 218 (VEGK…KKTT). Residues S85, S91, and S93 each carry the phosphoserine modification. Residues 138–209 (TDEEEEEEEE…EENELEELEE (72 aa)) are compositionally biased toward acidic residues. H244 is a Zn(2+) binding site. E247 serves as the catalytic Proton acceptor. 2 residues coordinate Zn(2+): H248 and E325.

This sequence belongs to the peptidase M16 family. As to quaternary structure, interacts with BACE1 and NRG1. Zn(2+) is required as a cofactor. In terms of tissue distribution, testis, and in a lower level in brain, heart and adrenal glands.

It is found in the mitochondrion. It localises to the cell projection. The protein resides in the dendrite. It carries out the reaction Hydrolysis of polypeptides, preferably at -Xaa-|-Arg-Lys-, and less commonly at -Arg-|-Arg-Xaa-, in which Xaa is not Arg or Lys.. Its function is as follows. Cleaves peptide substrates on the N-terminus of arginine residues in dibasic pairs. Is a critical activator of BACE1- and ADAM17-mediated pro-neuregulin ectodomain shedding, involved in the positive regulation of axonal maturation and myelination. Required for proper functioning of 2-oxoglutarate dehydrogenase (OGDH). The sequence is that of Nardilysin from Rattus norvegicus (Rat).